A 430-amino-acid chain; its full sequence is Enolase (430 aa).

Q164 serves as a coordination point for (2R)-2-phosphoglycerate. E206 serves as the catalytic Proton donor. Mg(2+) is bound by residues D243, E288, and D315. K340, R369, S370, and K391 together coordinate (2R)-2-phosphoglycerate. K340 acts as the Proton acceptor in catalysis.

It belongs to the enolase family. The cofactor is Mg(2+).

It localises to the cytoplasm. Its subcellular location is the secreted. It is found in the cell surface. The catalysed reaction is (2R)-2-phosphoglycerate = phosphoenolpyruvate + H2O. It participates in carbohydrate degradation; glycolysis; pyruvate from D-glyceraldehyde 3-phosphate: step 4/5. Catalyzes the reversible conversion of 2-phosphoglycerate (2-PG) into phosphoenolpyruvate (PEP). It is essential for the degradation of carbohydrates via glycolysis. This Lysinibacillus sphaericus (strain C3-41) protein is Enolase.